The primary structure comprises 558 residues: MDSSPPKTITKALPRFSELKPPLSEDIIEALDRSGFEVCTPVQAETIPFLCSHKDVVVDAATGSGKTLAFLLPFIEIIRRSNSYPPKPHQVMGVIISPTRELSAQIHKVAEPFVSTLPNVNSVLLVGGREVEADMNTLEEEGANLLIGTPGRLSDMMKRMEFLDFRNLEILILDEADRLLDMGFQKQVNYIISRLPKQRRTGLFSATQTQAVADLAKAGLRNAMEVISGAESKSKTSSGLYCEYLKCEADQKSSQLVHLLIENKNKKLVVFFMTCACVDYWGLVLSKIPTLKSISFFSTHGKMDQKGRDTALASFTEASSGVLLCTDVAARGLDIPGIDYVVQYDPPQDPDVFIHRVGRTARMERQGRAIVFLMPKETDYVEFMRIRRVPLQERKCSENASDVIPIIRSLAIKDRAVLEKGLQAFVSFVRAYKEHHCSYIFSWKGLEIGKLAMGYGILSFPYISEVKQDRIGIVGFTPVQGITFEDIKYKNKSREKQRQQNLLARKDKLQQEKRGKRKKSSKEAVDDSNKASRKRKLTGRQRQTIQTAQDEEEMNLRL.

The Q motif motif lies at 16–44; that stretch reads FSELKPPLSEDIIEALDRSGFEVCTPVQA. The 180-residue stretch at 47-226 folds into the Helicase ATP-binding domain; that stretch reads IPFLCSHKDV…KAGLRNAMEV (180 aa). 60–67 contacts ATP; the sequence is AATGSGKT. Positions 174–177 match the DEAD box motif; sequence DEAD. Positions 255–402 constitute a Helicase C-terminal domain; the sequence is QLVHLLIENK…ERKCSENASD (148 aa). The disordered stretch occupies residues 506–558; that stretch reads KDKLQQEKRGKRKKSSKEAVDDSNKASRKRKLTGRQRQTIQTAQDEEEMNLRL. Residues 521–530 show a composition bias toward basic and acidic residues; that stretch reads SKEAVDDSNK. Residues 549–558 show a composition bias toward acidic residues; the sequence is QDEEEMNLRL.

Belongs to the DEAD box helicase family. DDX55/SPB4 subfamily.

The catalysed reaction is ATP + H2O = ADP + phosphate + H(+). This Arabidopsis thaliana (Mouse-ear cress) protein is DEAD-box ATP-dependent RNA helicase 49 (RH49).